A 398-amino-acid chain; its full sequence is Na(+)/H(+) antiporter NhaA (398 aa).

Helical transmembrane passes span 8–28 (FLQL…LALI), 59–79 (LLLW…GMEI), 96–116 (LPVI…SFII), 124–144 (AGWA…LSLL), 154–174 (VFLL…IALF), 177–197 (AELH…LLML), 202–222 (VMLL…VLKS), 223–243 (GVHA…IRGA), 261–281 (YFIL…GLSW), 292–312 (IIVG…WLAV), 328–348 (LFGL…IGGL), and 362–382 (LGIL…LRNA).

This sequence belongs to the NhaA Na(+)/H(+) (TC 2.A.33) antiporter family.

Its subcellular location is the cell inner membrane. The enzyme catalyses Na(+)(in) + 2 H(+)(out) = Na(+)(out) + 2 H(+)(in). In terms of biological role, na(+)/H(+) antiporter that extrudes sodium in exchange for external protons. This chain is Na(+)/H(+) antiporter NhaA, found in Tolumonas auensis (strain DSM 9187 / NBRC 110442 / TA 4).